Consider the following 213-residue polypeptide: MIITIFGPPGSGKGTQSSLLIAKYNFKLVSVGDLLRNIISSESKLGKGIKDTVESGNLIQDEVICKLLCDQLALIDGDFLLDGFPRNLNQAHFLTQVLQKRCNRDVDLVIELQLDDNIAIDRLKDRLTCLDCKSIYSISSFKNTTCAKCKSTRLEKRIDDANMLAINKRIREYHSQIEGLREYYKDKLLTINANLSVDRVMQEIESKISCNLI.

Position 10-15 (10-15) interacts with ATP; it reads GSGKGT. The NMP stretch occupies residues 30–59; sequence SVGDLLRNIISSESKLGKGIKDTVESGNLI. AMP contacts are provided by residues R36, 57–59, 83–86, and Q90; these read NLI and GFPR. The tract at residues 125–160 is LID; the sequence is DRLTCLDCKSIYSISSFKNTTCAKCKSTRLEKRIDD. Position 126 (R126) interacts with ATP. Zn(2+)-binding residues include C129 and C132. 135–136 serves as a coordination point for ATP; it reads IY. Zn(2+)-binding residues include C146 and C149. AMP is bound by residues R157 and R169. L195 is an ATP binding site.

The protein belongs to the adenylate kinase family. Monomer.

It is found in the cytoplasm. It catalyses the reaction AMP + ATP = 2 ADP. It functions in the pathway purine metabolism; AMP biosynthesis via salvage pathway; AMP from ADP: step 1/1. Catalyzes the reversible transfer of the terminal phosphate group between ATP and AMP. Plays an important role in cellular energy homeostasis and in adenine nucleotide metabolism. This is Adenylate kinase from Wolbachia pipientis subsp. Culex pipiens (strain wPip).